We begin with the raw amino-acid sequence, 534 residues long: 26S proteasome non-ATPase regulatory subunit 3 (534 aa).

Basic and acidic residues predominate over residues 1 to 16; that stretch reads MKQEGSARRRGADKAK. The tract at residues 1–68 is disordered; it reads MKQEGSARRR…AAEHSQRELD (68 aa). The span at 17–32 shows a compositional bias: pro residues; sequence PPPGGGEQEPPPPPAP. A Glycyl lysine isopeptide (Lys-Gly) (interchain with G-Cter in SUMO1); alternate cross-link involves residue Lys-38. Residue Lys-38 forms a Glycyl lysine isopeptide (Lys-Gly) (interchain with G-Cter in SUMO2); alternate linkage. The segment covering 49-61 has biased composition (low complexity); that stretch reads GETAGKTAAAAAE. The PCI domain maps to 286–465; the sequence is ARYLYYTGRI…GYVQSKEMID (180 aa). Phosphoserine occurs at positions 418 and 430. The tract at residues 500 to 534 is disordered; that stretch reads SYNKDLESAEERREREQQDLEFAKEMAEDDDDSFP. Basic and acidic residues predominate over residues 501-525; sequence YNKDLESAEERREREQQDLEFAKEM.

This sequence belongs to the proteasome subunit S3 family. As to quaternary structure, component of the 19S proteasome regulatory particle complex. The 26S proteasome consists of a 20S core particle (CP) and two 19S regulatory subunits (RP). The regulatory particle is made of a lid composed of 9 subunits including PSMD3, a base containing 6 ATPases and few additional components. Interacts with UBQLN1 (via ubiquitin-like domain). Interacts with ERCC6.

Functionally, component of the 26S proteasome, a multiprotein complex involved in the ATP-dependent degradation of ubiquitinated proteins. This complex plays a key role in the maintenance of protein homeostasis by removing misfolded or damaged proteins, which could impair cellular functions, and by removing proteins whose functions are no longer required. Therefore, the proteasome participates in numerous cellular processes, including cell cycle progression, apoptosis, or DNA damage repair. The polypeptide is 26S proteasome non-ATPase regulatory subunit 3 (PSMD3) (Bos taurus (Bovine)).